We begin with the raw amino-acid sequence, 129 residues long: Protein Turandot A1 (129 aa).

Residues 1–21 form the signal peptide; that stretch reads MNSSTALMCFALLLISPLCMG. N-linked (GlcNAc...) asparagine glycosylation occurs at N49.

The protein belongs to the Turandot family.

It is found in the secreted. Functionally, a humoral factor that plays a role in stress tolerance; gives increased resistance to the lethal effects of bacterial challenge and stress. Regulated by the JAK/STAT pathway and NF-KB-like Relish pathway in the fat body, upd3 in the hemocytes and Mekk1 in response to septic injury and consequent immune response. This is Protein Turandot A1 (TotA1) from Drosophila simulans (Fruit fly).